The following is a 132-amino-acid chain: Small ribosomal subunit protein uS8 (132 aa).

The protein belongs to the universal ribosomal protein uS8 family. Part of the 30S ribosomal subunit. Contacts proteins S5 and S12.

Functionally, one of the primary rRNA binding proteins, it binds directly to 16S rRNA central domain where it helps coordinate assembly of the platform of the 30S subunit. The protein is Small ribosomal subunit protein uS8 of Rickettsia rickettsii (strain Sheila Smith).